We begin with the raw amino-acid sequence, 124 residues long: UPF0382 membrane protein HI_1073 (124 aa).

3 helical membrane passes run 6-26 (LTLVALSGFFCVALGAFAAHG), 70-90 (SMSSWLIGILLFSGSLYALAF), and 95-115 (VIVWITPIGGTLFLIGWISLA).

This sequence belongs to the UPF0382 family.

Its subcellular location is the cell membrane. The protein is UPF0382 membrane protein HI_1073 of Haemophilus influenzae (strain ATCC 51907 / DSM 11121 / KW20 / Rd).